The following is a 247-amino-acid chain: Capsid protein (247 aa).

Residues 1–40 are DNA-binding; sequence MWGTSNCACAKFQIRRRYARPYRRRHIRRYRRRRRHFRRR. Positions 15-44 are nuclear localization signals; sequence RRRYARPYRRRHIRRYRRRRRHFRRRRFTT.

The protein belongs to the circoviridae capsid protein family. As to quaternary structure, homomultimer. Assembles in the nucleus, presumably in an immature form, then migrates to the cytoplasm once assembled as mature virion. Interacts with Rep; this interaction relocates Rep into the nucleus.

The protein resides in the host nucleus. Its subcellular location is the virion. In terms of biological role, self-assembles to form the virion icosahedral capsid with a T=1 symmetry. This very small capsid (17 - 22 nm in diameter) allows the virus to be very stable in the environment and resistant to some disinfectants, including detergents. Essential for the initial attachment to heparan sulfate moieties and chondroitin sulfate B of the host cell surface proteoglycans. After attachment, the virus is endocytosed and traffics to the nucleus. The capsid protein binds and transports the viral genome and Rep across the nuclear envelope. The chain is Capsid protein (Cap) from Beak and feather disease virus (BFDV).